The chain runs to 504 residues: ATP synthase subunit alpha (504 aa).

171–178 (GDRQTGKT) contacts ATP.

Belongs to the ATPase alpha/beta chains family. In terms of assembly, F-type ATPases have 2 components, CF(1) - the catalytic core - and CF(0) - the membrane proton channel. CF(1) has five subunits: alpha(3), beta(3), gamma(1), delta(1), epsilon(1). CF(0) has three main subunits: a(1), b(2) and c(9-12). The alpha and beta chains form an alternating ring which encloses part of the gamma chain. CF(1) is attached to CF(0) by a central stalk formed by the gamma and epsilon chains, while a peripheral stalk is formed by the delta and b chains.

The protein resides in the cell inner membrane. The catalysed reaction is ATP + H2O + 4 H(+)(in) = ADP + phosphate + 5 H(+)(out). Produces ATP from ADP in the presence of a proton gradient across the membrane. The alpha chain is a regulatory subunit. This Helicobacter hepaticus (strain ATCC 51449 / 3B1) protein is ATP synthase subunit alpha.